Reading from the N-terminus, the 144-residue chain is Maximins 10/H3 (144 aa).

The N-terminal stretch at 1 to 18 is a signal peptide; it reads MNFKYIVAVSFLIASAYA. Residues 19 to 43 constitute a propeptide that is removed on maturation; sequence RSVKNDEQSLSQRDVLDEESLREFR. The residue at position 70 (Ser-70) is a Serine amide. A propeptide spanning residues 74–123 is cleaved from the precursor; that stretch reads TAEDHEVMKRLEAVMRDLDSLDYPEEATERETRGFNQEEIANLFTKKEKR. Ile-143 bears the Isoleucine amide mark.

The protein belongs to the bombinin family. Expressed by the skin glands.

Its subcellular location is the secreted. Maximin-10 shows antimicrobial activity against bacteria and against the fungus C.albicans. It has little hemolytic activity. Its function is as follows. Maximin-H3 shows antibacterial activity against both Gram-positive and Gram-negative bacteria. It also shows antimicrobial activity against the fungus C.albicans. Shows strong hemolytic activity. This Bombina maxima (Giant fire-bellied toad) protein is Maximins 10/H3.